Reading from the N-terminus, the 330-residue chain is Reaction center protein M chain (330 aa).

Transmembrane regions (helical) follow at residues 57–83, 115–144, and 147–172; these read GWTS…AQVG, GGWY…EQHK, and KHIF…ILMG. His185 and His205 together coordinate (7R,8Z)-bacteriochlorophyll b. A helical membrane pass occupies residues 202–230; the sequence is NPFHCLSIVFLYGSVLLFCMHGGTILAVT. Positions 222 and 237 each coordinate Fe cation. Residue Trp255 coordinates a ubiquinone. A helical membrane pass occupies residues 264–290; that stretch reads TMEGIHRWAWWFAVLTPITGGIGILLT. His269 lines the Fe cation pocket.

Belongs to the reaction center PufL/M/PsbA/D family. As to quaternary structure, reaction center is composed of four bacteriochlorophylls, two bacteriopheophytins, two ubiquinones, one iron, and two highly hydrophobic polypeptide chains (designated L and M).

The protein localises to the cellular chromatophore membrane. Its function is as follows. The reaction center is a membrane-bound complex that mediates the initial photochemical event in the electron transfer process of photosynthesis. This Roseobacter denitrificans (strain ATCC 33942 / OCh 114) (Erythrobacter sp. (strain OCh 114)) protein is Reaction center protein M chain (pufM).